Reading from the N-terminus, the 93-residue chain is Small ribosomal subunit protein uS19 (93 aa).

It belongs to the universal ribosomal protein uS19 family.

Its function is as follows. Protein S19 forms a complex with S13 that binds strongly to the 16S ribosomal RNA. The polypeptide is Small ribosomal subunit protein uS19 (Campylobacter concisus (strain 13826)).